We begin with the raw amino-acid sequence, 446 residues long: tRNA-2-methylthio-N(6)-dimethylallyladenosine synthase (446 aa).

Residues K3 to S120 form the MTTase N-terminal domain. C12, C49, C83, C157, C161, and C164 together coordinate [4Fe-4S] cluster. Residues K143 to R375 enclose the Radical SAM core domain. The TRAM domain occupies D378–V444.

It belongs to the methylthiotransferase family. MiaB subfamily. In terms of assembly, monomer. [4Fe-4S] cluster serves as cofactor.

The protein localises to the cytoplasm. The enzyme catalyses N(6)-dimethylallyladenosine(37) in tRNA + (sulfur carrier)-SH + AH2 + 2 S-adenosyl-L-methionine = 2-methylsulfanyl-N(6)-dimethylallyladenosine(37) in tRNA + (sulfur carrier)-H + 5'-deoxyadenosine + L-methionine + A + S-adenosyl-L-homocysteine + 2 H(+). In terms of biological role, catalyzes the methylthiolation of N6-(dimethylallyl)adenosine (i(6)A), leading to the formation of 2-methylthio-N6-(dimethylallyl)adenosine (ms(2)i(6)A) at position 37 in tRNAs that read codons beginning with uridine. The protein is tRNA-2-methylthio-N(6)-dimethylallyladenosine synthase of Janthinobacterium sp. (strain Marseille) (Minibacterium massiliensis).